Consider the following 140-residue polypeptide: Large ribosomal subunit protein uL16 (140 aa).

This sequence belongs to the universal ribosomal protein uL16 family. In terms of assembly, part of the 50S ribosomal subunit.

In terms of biological role, binds 23S rRNA and is also seen to make contacts with the A and possibly P site tRNAs. This chain is Large ribosomal subunit protein uL16, found in Trichlorobacter lovleyi (strain ATCC BAA-1151 / DSM 17278 / SZ) (Geobacter lovleyi).